Here is a 52-residue protein sequence, read N- to C-terminus: Small ribosomal subunit protein uS14 (52 aa).

Zn(2+) is bound by residues Cys17, Cys20, Cys35, and Cys38.

Belongs to the universal ribosomal protein uS14 family. Zinc-binding uS14 subfamily. In terms of assembly, part of the 30S ribosomal subunit. Zn(2+) serves as cofactor.

Its function is as follows. Binds 16S rRNA, required for the assembly of 30S particles. In Halobacterium salinarum (strain ATCC 700922 / JCM 11081 / NRC-1) (Halobacterium halobium), this protein is Small ribosomal subunit protein uS14.